Reading from the N-terminus, the 164-residue chain is HTH-type transcriptional regulator IscR (164 aa).

The HTH rrf2-type domain occupies 2–131; it reads RLTSKGRYAV…GSISLEELVK (130 aa). Positions 28-51 form a DNA-binding region, H-T-H motif; that stretch reads LADISERQGISLSYLEQLFSRLRK. Residues C92, C98, and C104 each contribute to the [2Fe-2S] cluster site. Residues 140 to 164 are disordered; it reads DRQDSDKRRTPNGRPQETINVNLRA. The segment covering 152–164 has biased composition (polar residues); sequence GRPQETINVNLRA.

[2Fe-2S] cluster serves as cofactor.

Regulates the transcription of several operons and genes involved in the biogenesis of Fe-S clusters and Fe-S-containing proteins. The chain is HTH-type transcriptional regulator IscR from Xenorhabdus nematophila (strain ATCC 19061 / DSM 3370 / CCUG 14189 / LMG 1036 / NCIMB 9965 / AN6).